The sequence spans 484 residues: UDP-N-acetylmuramate--L-alanine ligase (484 aa).

127 to 133 is a binding site for ATP; sequence GTHGKTT.

This sequence belongs to the MurCDEF family.

The protein localises to the cytoplasm. The enzyme catalyses UDP-N-acetyl-alpha-D-muramate + L-alanine + ATP = UDP-N-acetyl-alpha-D-muramoyl-L-alanine + ADP + phosphate + H(+). It functions in the pathway cell wall biogenesis; peptidoglycan biosynthesis. In terms of biological role, cell wall formation. The chain is UDP-N-acetylmuramate--L-alanine ligase from Shewanella amazonensis (strain ATCC BAA-1098 / SB2B).